A 228-amino-acid polypeptide reads, in one-letter code: Dolichyl-phosphate hexose transferase HVO_1613 (228 aa).

This sequence belongs to the glycosyltransferase 2 family.

Its function is as follows. Glycosyltransferase that adds a monosaccharide to dolichol phosphate, thereby being responsible for generating one of the three monosaccharide-modified dolichol phosphates. The subunit onto which additional sugars are added is not known. The polypeptide is Dolichyl-phosphate hexose transferase HVO_1613 (Haloferax volcanii (strain ATCC 29605 / DSM 3757 / JCM 8879 / NBRC 14742 / NCIMB 2012 / VKM B-1768 / DS2) (Halobacterium volcanii)).